A 207-amino-acid chain; its full sequence is Large ribosomal subunit protein bL25 (207 aa).

This sequence belongs to the bacterial ribosomal protein bL25 family. CTC subfamily. Part of the 50S ribosomal subunit; part of the 5S rRNA/L5/L18/L25 subcomplex. Contacts the 5S rRNA. Binds to the 5S rRNA independently of L5 and L18.

Functionally, this is one of the proteins that binds to the 5S RNA in the ribosome where it forms part of the central protuberance. The chain is Large ribosomal subunit protein bL25 from Rhizorhabdus wittichii (strain DSM 6014 / CCUG 31198 / JCM 15750 / NBRC 105917 / EY 4224 / RW1) (Sphingomonas wittichii).